The sequence spans 150 residues: Transcriptional repressor NrdR (150 aa).

Residues 3–33 (CPFCGGESRVLESRPASDEEAVRRRRECLAC) fold into a zinc finger. One can recognise an ATP-cone domain in the interval 48-138 (LIVVKKDGRR…VYREFKDLNE (91 aa)).

This sequence belongs to the NrdR family. Zn(2+) serves as cofactor.

Negatively regulates transcription of bacterial ribonucleotide reductase nrd genes and operons by binding to NrdR-boxes. This is Transcriptional repressor NrdR from Symbiobacterium thermophilum (strain DSM 24528 / JCM 14929 / IAM 14863 / T).